The chain runs to 233 residues: Adapter protein MecA (233 aa).

This sequence belongs to the MecA family. Homodimer.

Functionally, enables the recognition and targeting of unfolded and aggregated proteins to the ClpC protease or to other proteins involved in proteolysis. This Lactococcus lactis subsp. lactis (strain IL1403) (Streptococcus lactis) protein is Adapter protein MecA.